The primary structure comprises 348 residues: 3-keto-steroid reductase (348 aa).

NADP(+) is bound by residues leucine 18, threonine 41, and arginine 47. Residues serine 180 and tyrosine 203 each act as proton donor in the active site. NADP(+)-binding residues include tyrosine 203, lysine 207, and serine 238. Residue lysine 207 is the Lowers pKa of active site Tyr of the active site.

This sequence belongs to the short-chain dehydrogenases/reductases (SDR) family. ERG27 subfamily.

The enzyme catalyses a 3beta-hydroxysteroid + NADP(+) = a 3-oxosteroid + NADPH + H(+). The protein operates within steroid biosynthesis; zymosterol biosynthesis; zymosterol from lanosterol: step 5/6. Its function is as follows. Responsible for the reduction of the keto group on the C-3 of sterols. The chain is 3-keto-steroid reductase (ERG27) from Candida glabrata (strain ATCC 2001 / BCRC 20586 / JCM 3761 / NBRC 0622 / NRRL Y-65 / CBS 138) (Yeast).